Here is a 505-residue protein sequence, read N- to C-terminus: Maturase K (505 aa).

The protein belongs to the intron maturase 2 family. MatK subfamily.

It localises to the plastid. Its subcellular location is the chloroplast. In terms of biological role, usually encoded in the trnK tRNA gene intron. Probably assists in splicing its own and other chloroplast group II introns. The chain is Maturase K from Coffea arabica (Arabian coffee).